The following is a 223-amino-acid chain: MIIDKLTIFGTDNIGIYIFTNDKYTIVPKNLDVETIQKIQETFKTEIIQTTIAKSFLIGIFVAGNNNVILLPRNVDDEEVKKIKDIARDVRVEILDIRPTALGNIILTNSYGALIYPELSSIEFKKIKESLQIDNIEKGSIANIITVGSVGVITDKAGLVHIDTTEEELDKLSKLFRVKIDTGTVNFGSAFIHSGLIANRNGVLVGSATTGPEILRIQRAFSD.

This sequence belongs to the eIF-6 family.

Binds to the 50S ribosomal subunit and prevents its association with the 30S ribosomal subunit to form the 70S initiation complex. This Sulfurisphaera tokodaii (strain DSM 16993 / JCM 10545 / NBRC 100140 / 7) (Sulfolobus tokodaii) protein is Translation initiation factor 6.